Here is a 521-residue protein sequence, read N- to C-terminus: Cytochrome P450 1A1 (521 aa).

Phe229 provides a ligand contact to substrate. Cys463 lines the heme pocket.

Belongs to the cytochrome P450 family. Requires heme as cofactor.

The protein localises to the endoplasmic reticulum membrane. It localises to the microsome membrane. It catalyses the reaction an organic molecule + reduced [NADPH--hemoprotein reductase] + O2 = an alcohol + oxidized [NADPH--hemoprotein reductase] + H2O + H(+). Cytochromes P450 are a group of heme-thiolate monooxygenases. They oxidize a variety of structurally unrelated compounds, including steroids, fatty acids, and xenobiotics. The sequence is that of Cytochrome P450 1A1 (cyp1a1) from Opsanus tau (Oyster toadfish).